The following is a 94-amino-acid chain: Enhancer of yellow 2 transcription factor (94 aa).

It belongs to the ENY2 family. As to quaternary structure, component of the nuclear pore complex (NPC)-associated AMEX complex (anchoring and mRNA export complex), composed of at least e(y)2 and xmas-2. Component of the SAGA transcription coactivator-HAT complexes, at least composed of Ada2b, e(y)2, Pcaf/Gcn5, Taf10 and Nipped-A/Trrap. Within the SAGA complex, e(y)2, Sgf11, and not/nonstop form an additional subcomplex of SAGA called the DUB module (deubiquitination module). Component of the THO complex, composed of at least e(y)2, HPR1, THO2, THOC5, THOC6 and THOC7. Interacts with e(y)1. Interacts with su(Hw) (via zinc fingers). Interacts with xmas-2; required for localization to the nuclear periphery. Interacts with the nuclear pore complex (NPC).

It is found in the nucleus. Its subcellular location is the nucleoplasm. It localises to the cytoplasm. Involved in mRNA export coupled transcription activation by association with both the AMEX and the SAGA complexes. The SAGA complex is a multiprotein complex that activates transcription by remodeling chromatin and mediating histone acetylation and deubiquitination. Within the SAGA complex, participates in a subcomplex that specifically deubiquitinates histone H2B. The SAGA complex is recruited to specific gene promoters by activators, where it is required for transcription. Required for nuclear receptor-mediated transactivation. Involved in transcription elongation by recruiting the THO complex onto nascent mRNA. The AMEX complex functions in docking export-competent ribonucleoprotein particles (mRNPs) to the nuclear entrance of the nuclear pore complex (nuclear basket). AMEX participates in mRNA export and accurate chromatin positioning in the nucleus by tethering genes to the nuclear periphery. The sequence is that of Enhancer of yellow 2 transcription factor from Drosophila mojavensis (Fruit fly).